Consider the following 237-residue polypeptide: Flagellar brake protein YcgR (237 aa).

A PilZ domain is found at 108 to 225 (QRRRQFRVTT…MERKIQSAVF (118 aa)).

It belongs to the YcgR family. As to quaternary structure, monomer. Interacts with the flagellar basal bodies.

The protein resides in the bacterial flagellum basal body. Functionally, acts as a flagellar brake, regulating swimming and swarming in a bis-(3'-5') cyclic diguanylic acid (c-di-GMP)-dependent manner. Binds 1 c-di-GMP dimer per subunit. Increasing levels of c-di-GMP lead to decreased motility. This Serratia proteamaculans (strain 568) protein is Flagellar brake protein YcgR.